Reading from the N-terminus, the 291-residue chain is 5-hydroxytryptamine receptor 1D (291 aa).

The helical transmembrane segment at 30 to 54 (LCDIWLSSDITCCTASILHLCVIAL) threads the bilayer. A disulfide bridge links cysteine 31 with cysteine 108. Residues aspartate 38 and cysteine 42 each coordinate serotonin. The DRY motif; important for ligand-induced conformation changes motif lies at 55–57 (DRY). A helical transmembrane segment spans residues 75–96 (AAAMIAIVWAISICISIPPLFW). Asparagine 111 is a glycosylation site (N-linked (GlcNAc...) asparagine). 3 helical membrane-spanning segments follow: residues 115-138 (ISYT…ILYG), 221-246 (KTLG…VLPI), and 256-279 (ALFD…YTVF). Serotonin is bound at residue serine 241. The NPxxY motif; important for ligand-induced conformation changes and signaling signature appears at 272-276 (NPIIY).

This sequence belongs to the G-protein coupled receptor 1 family. As to quaternary structure, homodimer. Heterodimer with HTR1B.

It is found in the cell membrane. In terms of biological role, G-protein coupled receptor for 5-hydroxytryptamine (serotonin). Also functions as a receptor for ergot alkaloid derivatives, various anxiolytic and antidepressant drugs and other psychoactive substances. Ligand binding causes a conformation change that triggers signaling via guanine nucleotide-binding proteins (G proteins) and modulates the activity of downstream effectors, such as adenylate cyclase. HTR1D is coupled to G(i)/G(o) G alpha proteins and mediates inhibitory neurotransmission by inhibiting adenylate cyclase activity. Regulates the release of 5-hydroxytryptamine in the brain, and thereby affects neural activity. May also play a role in regulating the release of other neurotransmitters. May play a role in vasoconstriction. This Sus scrofa (Pig) protein is 5-hydroxytryptamine receptor 1D (HTR1D).